We begin with the raw amino-acid sequence, 204 residues long: uncharacterized protein (204 aa).

This is an uncharacterized protein from Stylonychia lemnae (Ciliate).